Reading from the N-terminus, the 535-residue chain is Probable inorganic phosphate transporter 1-7 (535 aa).

At Met-1–Ala-24 the chain is on the cytoplasmic side. A helical membrane pass occupies residues Ile-25–Val-45. Residues Thr-46–Ser-70 are Extracellular-facing. Residues Ala-71–Leu-91 traverse the membrane as a helical segment. Residues Gly-92–Lys-99 lie on the Cytoplasmic side of the membrane. Residues Val-100–Gly-120 form a helical membrane-spanning segment. At Ser-121 to Cys-131 the chain is on the extracellular side. Residues Phe-132–Met-152 form a helical membrane-spanning segment. The Cytoplasmic segment spans residues Ser-153–Arg-161. The chain crosses the membrane as a helical span at residues Gly-162–Phe-182. The Extracellular portion of the chain corresponds to Ala-183–Ala-211. Residues Asp-212 to Ser-232 traverse the membrane as a helical segment. The Cytoplasmic portion of the chain corresponds to Arg-233–Arg-289. Residues His-290–Ser-310 traverse the membrane as a helical segment. The Extracellular portion of the chain corresponds to Gln-311–Thr-345. The helical transmembrane segment at Leu-346 to Ile-366 threads the bilayer. Residues Gly-367–Arg-368 are Cytoplasmic-facing. A helical membrane pass occupies residues Phe-369–Pro-389. The Extracellular segment spans residues Tyr-390–Arg-399. The helical transmembrane segment at Ile-400 to Thr-420 threads the bilayer. Over Thr-421–His-438 the chain is Cytoplasmic. A helical transmembrane segment spans residues Gly-439–Leu-459. Over Ala-460–Asn-480 the chain is Extracellular. A helical transmembrane segment spans residues Ser-481–Glu-501. Over Ser-502–Ala-535 the chain is Cytoplasmic. The tract at residues Ser-506 to Ala-535 is disordered. A compositionally biased stretch (low complexity) spans Glu-519–Ala-535. Ser-520 carries the phosphoserine modification.

It belongs to the major facilitator superfamily. Phosphate:H(+) symporter (TC 2.A.1.9) family. Mature pollen.

It localises to the membrane. In terms of biological role, high-affinity transporter for external inorganic phosphate. This is Probable inorganic phosphate transporter 1-7 (PHT1-7) from Arabidopsis thaliana (Mouse-ear cress).